Reading from the N-terminus, the 494-residue chain is Ribonuclease H (494 aa).

Disordered stretches follow at residues 79–148 (NRRR…APPP) and 205–231 (RSGLEKSDRGDGAASLSALSEPQVGLR). Polar residues-rich tracts occupy residues 84 to 100 (GSTSKKAQVKSSVNQLA) and 131 to 143 (PTTSRASGETRTS). In terms of domain architecture, RNase H type-1 spans 272-488 (SSVPQVVYVD…ADVLAVAGAR (217 aa)). Positions 281, 325, 374, and 480 each coordinate Mg(2+).

Belongs to the RNase H family. As to quaternary structure, monomer. Requires Mg(2+) as cofactor.

The enzyme catalyses Endonucleolytic cleavage to 5'-phosphomonoester.. Endonuclease that specifically degrades the RNA of RNA-DNA hybrids. The chain is Ribonuclease H (RNH1) from Crithidia fasciculata.